The chain runs to 65 residues: Large ribosomal subunit protein bL32 (65 aa).

It belongs to the bacterial ribosomal protein bL32 family.

The chain is Large ribosomal subunit protein bL32 from Tropheryma whipplei (strain TW08/27) (Whipple's bacillus).